Consider the following 758-residue polypeptide: 5-methyltetrahydropteroyltriglutamate--homocysteine methyltransferase (758 aa).

Residues 17–20 and K117 each bind 5-methyltetrahydropteroyltri-L-glutamate; that span reads RELK. L-homocysteine is bound by residues 434–436 and E487; that span reads IGS. L-methionine is bound by residues 434-436 and E487; that span reads IGS. Residues 518 to 519 and W564 each bind 5-methyltetrahydropteroyltri-L-glutamate; that span reads RC. D602 contributes to the L-homocysteine binding site. Position 602 (D602) interacts with L-methionine. Residue E608 coordinates 5-methyltetrahydropteroyltri-L-glutamate. Residues H644, C646, and E668 each coordinate Zn(2+). The Proton donor role is filled by H697. C729 contributes to the Zn(2+) binding site.

This sequence belongs to the vitamin-B12 independent methionine synthase family. Zn(2+) is required as a cofactor.

The enzyme catalyses 5-methyltetrahydropteroyltri-L-glutamate + L-homocysteine = tetrahydropteroyltri-L-glutamate + L-methionine. The protein operates within amino-acid biosynthesis; L-methionine biosynthesis via de novo pathway; L-methionine from L-homocysteine (MetE route): step 1/1. In terms of biological role, catalyzes the transfer of a methyl group from 5-methyltetrahydrofolate to homocysteine resulting in methionine formation. This chain is 5-methyltetrahydropteroyltriglutamate--homocysteine methyltransferase, found in Yersinia pestis (strain Pestoides F).